The sequence spans 330 residues: D-lactate dehydrogenase (330 aa).

Residues 156 to 157 (RI), aspartate 176, 206 to 207 (VP), 233 to 235 (AAR), and aspartate 259 contribute to the NAD(+) site. Arginine 235 is a catalytic residue. Glutamate 264 is an active-site residue. The active-site Proton donor is histidine 296.

This sequence belongs to the D-isomer specific 2-hydroxyacid dehydrogenase family.

The enzyme catalyses (R)-lactate + NAD(+) = pyruvate + NADH + H(+). The sequence is that of D-lactate dehydrogenase (ldhD) from Staphylococcus aureus (strain MSSA476).